A 688-amino-acid chain; its full sequence is MARTPVSPPATSAPAERAAWLRAELERANYAYYVLDQPDLPDAEYDRLFKELESIETEHPDLIVPDSPTQRVGGEAASGFEPVVHEQPMLSLNNGFADEDIVAFDKRVGDALGKNASEPPVPVEYAAELKFDGLAISLRYVDGVFVQASTRGDGTTGENVTENVRTIRSIPLRLKGKRVPHVLDVRGEVLMFKRDFERLNERQRAAEQKEFANPRNAAAGSLRQLDSKITAQRPLSFFSYGIGVLEGMDMPATHSELLDWYKELGLPVNGERAVVHGAEGLLGFFHAVGEKREKLPYDIDGVVYKVNRRDEQEALGFVSRAPRFALAHKFPAQEALTRLVAIDVQVGRTGAVTPVARLEPVFVGGATVTNATLHNEDEVRRKDIRIGDTVIVRRAGDVIPEVVSALLDRRPDDAREFVMPTHCPVCGSNIERLPDEAIARCTGGLFCPAQRKQALWHFAQRRALDIDGLGEKIIDQLVEQNLVRTPADLFNLGFATLAELDRFAEKSAQNLLDSLEKAKHTTLARFIYALGIRHVGESTAKDLAKHFGSLDPIMDASVEALLEVNDVGPVVAESIHQFFAEEHNRTVIEQLRAPGRVTWPEGPPAPKAPQGVLAGKTVVLTGTLPSLAREEAKEMLEAAGAKVAGSVSKKTDYVVAGAEAGSKLAKAEELGIPVLDEDGMRKLLEGQL.

NAD(+) contacts are provided by residues aspartate 42–aspartate 46, serine 91–leucine 92, and glutamate 128. The active-site N6-AMP-lysine intermediate is lysine 130. Residues arginine 151, glutamate 188, lysine 305, and lysine 329 each coordinate NAD(+). Residues cysteine 423, cysteine 426, cysteine 441, and cysteine 447 each coordinate Zn(2+). In terms of domain architecture, BRCT spans alanine 608–leucine 688.

It belongs to the NAD-dependent DNA ligase family. LigA subfamily. Mg(2+) is required as a cofactor. Requires Mn(2+) as cofactor.

It carries out the reaction NAD(+) + (deoxyribonucleotide)n-3'-hydroxyl + 5'-phospho-(deoxyribonucleotide)m = (deoxyribonucleotide)n+m + AMP + beta-nicotinamide D-nucleotide.. Functionally, DNA ligase that catalyzes the formation of phosphodiester linkages between 5'-phosphoryl and 3'-hydroxyl groups in double-stranded DNA using NAD as a coenzyme and as the energy source for the reaction. It is essential for DNA replication and repair of damaged DNA. The polypeptide is DNA ligase (Paraburkholderia xenovorans (strain LB400)).